Consider the following 348-residue polypeptide: Flagellar P-ring protein (348 aa).

A signal peptide spans Met-1–Tyr-24.

The protein belongs to the FlgI family. The basal body constitutes a major portion of the flagellar organelle and consists of four rings (L,P,S, and M) mounted on a central rod.

It is found in the periplasm. The protein resides in the bacterial flagellum basal body. Functionally, assembles around the rod to form the L-ring and probably protects the motor/basal body from shearing forces during rotation. The chain is Flagellar P-ring protein from Helicobacter hepaticus (strain ATCC 51449 / 3B1).